A 161-amino-acid polypeptide reads, in one-letter code: MPSFDIVSEVDAVELKNAVENTRREMDGRFDFRGVEYSVDFKDMVVILRSESDFQCRQMVDILRGQLAKRNVDAKAMEVDDKIVHTGKTFAQNVKFKQGIEQDVAKKLIKLIKDSKVKVQAQIQGDSIRVTGKKRDDLQAIMQLARTSELGQPFQFNNFRD.

This sequence belongs to the YajQ family.

In terms of biological role, nucleotide-binding protein. The polypeptide is Nucleotide-binding protein Sama_2557 (Shewanella amazonensis (strain ATCC BAA-1098 / SB2B)).